The sequence spans 246 residues: Probable phosphatase PBPRB2022 (246 aa).

H8, H10, H16, H41, E74, H102, H132, D193, and H195 together coordinate Zn(2+).

Belongs to the PHP family. Zn(2+) serves as cofactor.

The chain is Probable phosphatase PBPRB2022 from Photobacterium profundum (strain SS9).